A 538-amino-acid polypeptide reads, in one-letter code: [Pyruvate dehydrogenase [acetyl-transferring]]-phosphatase 1, mitochondrial (538 aa).

A mitochondrion-targeting transit peptide spans 1 to 71; that stretch reads MPAPTQLFFP…WWQYTQGRRY (71 aa). Residues 109–525 form the PPM-type phosphatase domain; sequence VLGFDSNQLP…DDITIIVVQF (417 aa). The Mn(2+) site is built by aspartate 144 and glycine 145. N6-acetyllysine is present on lysine 202. Residues aspartate 418 and aspartate 516 each contribute to the Mn(2+) site.

The protein belongs to the PP2C family. In terms of assembly, heterodimer of a catalytic (PDP1) and a regulatory (PDPR) subunit. Mn(2+) serves as cofactor. It depends on Mg(2+) as a cofactor.

The protein resides in the mitochondrion. It catalyses the reaction O-phospho-L-seryl-[pyruvate dehydrogenase E1 alpha subunit] + H2O = L-seryl-[pyruvate dehydrogenase E1 alpha subunit] + phosphate. Magnesium-dependent and calcium-stimulated. PDP1 activity strongly depends on its Ca(2+)-dependent binding to the lipoyl domain of E2 subunit of component of the pyruvate dehydrogenase complex. Mitochondrial enzyme that catalyzes the dephosphorylation and concomitant reactivation of the alpha subunit of the E1 component of the pyruvate dehydrogenase complex (PDC), thereby stimulating the conversion of pyruvate into acetyl-CoA. The polypeptide is [Pyruvate dehydrogenase [acetyl-transferring]]-phosphatase 1, mitochondrial (PDP1) (Bos taurus (Bovine)).